We begin with the raw amino-acid sequence, 179 residues long: Large ribosomal subunit protein uL5 (179 aa).

This sequence belongs to the universal ribosomal protein uL5 family. Part of the 50S ribosomal subunit; part of the 5S rRNA/L5/L18/L25 subcomplex. Contacts the 5S rRNA and the P site tRNA. Forms a bridge to the 30S subunit in the 70S ribosome.

This is one of the proteins that bind and probably mediate the attachment of the 5S RNA into the large ribosomal subunit, where it forms part of the central protuberance. In the 70S ribosome it contacts protein S13 of the 30S subunit (bridge B1b), connecting the 2 subunits; this bridge is implicated in subunit movement. Contacts the P site tRNA; the 5S rRNA and some of its associated proteins might help stabilize positioning of ribosome-bound tRNAs. This is Large ribosomal subunit protein uL5 from Nitrosomonas eutropha (strain DSM 101675 / C91 / Nm57).